The sequence spans 145 residues: uncharacterized protein (145 aa).

It localises to the mitochondrion. This is an uncharacterized protein from Arabidopsis thaliana (Mouse-ear cress).